Reading from the N-terminus, the 344-residue chain is tRNA N6-adenosine threonylcarbamoyltransferase (344 aa).

Fe cation-binding residues include His-111 and His-115. Substrate is bound by residues 134 to 138, Asp-167, Gly-180, and Asn-274; that span reads LVSGG. Residue Asp-302 participates in Fe cation binding.

It belongs to the KAE1 / TsaD family. It depends on Fe(2+) as a cofactor.

It is found in the cytoplasm. The enzyme catalyses L-threonylcarbamoyladenylate + adenosine(37) in tRNA = N(6)-L-threonylcarbamoyladenosine(37) in tRNA + AMP + H(+). In terms of biological role, required for the formation of a threonylcarbamoyl group on adenosine at position 37 (t(6)A37) in tRNAs that read codons beginning with adenine. Is involved in the transfer of the threonylcarbamoyl moiety of threonylcarbamoyl-AMP (TC-AMP) to the N6 group of A37, together with TsaE and TsaB. TsaD likely plays a direct catalytic role in this reaction. This chain is tRNA N6-adenosine threonylcarbamoyltransferase, found in Dechloromonas aromatica (strain RCB).